The following is a 1313-amino-acid chain: MESGGGNAPAGALGAASESPQCPPPPGVEGAAGPAEPDGAAEGAAGGSGEGESGGGPRRALRAVYVRSESSQGGAAGGPEAGARQCLLRACEAEGAHLTSVPFGELDFGETAVLDAFYDADVAVVDMSDVSRQPSLFYHLGVRESFDMANNVILYHDTDADTALSLKDMVTQKNTASSGNYYFIPYIVTPCADYFCCESDAQRRASEYMQPNWDNILGPLCMPLVDRFISLLKDIHVTSCVYYKETLLNDIRKAREKYQGEELAKELARIKLRMDNTEVLTSDIIINLLLSYRDIQDYDAMVKLVETLEMLPTCDLADQHNIKFHYAFALNRRNSTGDREKALQIMLQVLQSCDHPGPDMFCLCGRIYKDIFLDSDCKDDTSRDSAIEWYRKGFELQSSLYSGINLAVLLIVAGQQFETSLELRKIGVRLNSLLGRKGSLEKMNNYWDVGQFFSVSMLAHDVGKAVQAAERLFKLKPPVWYLRSLVQNLLLIRRFKKTIIEHSPRQERLNFWLDIIFEATNEVTNGLRFPVLVIEPTKVYQPSYVSINNEAEERTVSLWHVSPTEMKQMHEWNFTASSIKGISLSKFDERCCFLYVHDNSDDFQIYFSTEEQCSRFFSLVKEMITNTAGSTVELEGETDGDTLEYEYDHDANGERVVLGKGTYGIVYAGRDLSNQVRIAIKEIPERDSRYSQPLHEEIALHKYLKHRNIVQYLGSVSENGYIKIFMEQVPGGSLSALLRSKWGPMKEPTIKFYTKQILEGLKYLHENQIVHRDIKGDNVLVNTYSGVVKISDFGTSKRLAGVNPCTETFTGTLQYMAPEIIDQGPRGYGAPADIWSLGCTIIEMATSKPPFHELGEPQAAMFKVGMFKIHPEIPEALSAEARAFILSCFEPDPHKRATTAELLREGFLRQVNKGKKNRIAFKPSEGPRGVVLALPTQGEPMATSSSEHGSVSPDSDAQPDALFERTRAPRHHLGHLLSVPDESSALEDRGLASSPEDRDQGLFLLRKDSERRAILYKILWEEQNQVASNLQECVAQSSEELHLSVGHIKQIIGILRDFIRSPEHRVMATTISKLKVDLDFDSSSISQIHLVLFGFQDAVNKILRNHLIRPHWMFAMDNIIRRAVQAAVTILIPELRAHFEPTCETEGVDKDMDEAEEGYPPATGPGQEAQPHQQHLSLQLGELRQETNRLLEHLVEKEREYQNLLRQTLEQKTQELYHLQLKLKSNCITENPAGPYGQRTDKELIDWLRLQGADAKTIEKIVEEGYTLSDILNEITKEDLRYLRLRGGLLCRLWSAVSQYRRAQEASETKDKA.

Positions 1–58 (MESGGGNAPAGALGAASESPQCPPPPGVEGAAGPAEPDGAAEGAAGGSGEGESGGGPR) are disordered. Low complexity predominate over residues 28-43 (VEGAAGPAEPDGAAEG). A compositionally biased stretch (gly residues) spans 44-57 (AAGGSGEGESGGGP). Residues 652-908 (NGERVVLGKG…TAELLREGFL (257 aa)) enclose the Protein kinase domain. Residues 658–666 (LGKGTYGIV) and Lys681 each bind ATP. Catalysis depends on Asp773, which acts as the Proton acceptor. The disordered stretch occupies residues 939–958 (EPMATSSSEHGSVSPDSDAQ). Over residues 942 to 955 (ATSSSEHGSVSPDS) the composition is skewed to polar residues. Ser994 carries the post-translational modification Phosphoserine. Residues 1179-1225 (QLGELRQETNRLLEHLVEKEREYQNLLRQTLEQKTQELYHLQLKLKS) are a coiled coil.

This sequence belongs to the protein kinase superfamily. STE Ser/Thr protein kinase family. MAP kinase kinase kinase subfamily. Requires Mg(2+) as cofactor. Isoform 2 and isoform 3 are widely expressed. Isoform 2 highest levels are observed in fetal brain, and isoform 3 highest levels in pancreas, peripheral blood leukocytes, fetal brain and spleen.

The enzyme catalyses L-seryl-[protein] + ATP = O-phospho-L-seryl-[protein] + ADP + H(+). It carries out the reaction L-threonyl-[protein] + ATP = O-phospho-L-threonyl-[protein] + ADP + H(+). With respect to regulation, contains an N-terminal autoinhibitory domain. Activated by phosphorylation at Thr-812, inhibited by phosphorylation at Ser-924 and Ser-994. In terms of biological role, serine/threonine kinase which acts as a component of the MAP kinase signal transduction pathway. Once activated, acts as an upstream activator of the p38 MAPK signal transduction cascade through the phosphorylation and activation of several MAP kinase kinases. May function in a signal transduction pathway that is activated by various cell stresses and leads to apoptosis. Involved in phosphorylation of WNK4 in response to osmotic stress or hypotonic low-chloride stimulation via the p38 MAPK signal transduction cascade. The chain is Mitogen-activated protein kinase kinase kinase 15 (MAP3K15) from Homo sapiens (Human).